A 270-amino-acid polypeptide reads, in one-letter code: Formamidopyrimidine-DNA glycosylase (270 aa).

The active-site Schiff-base intermediate with DNA is proline 2. Glutamate 3 serves as the catalytic Proton donor. Lysine 58 (proton donor; for beta-elimination activity) is an active-site residue. DNA contacts are provided by histidine 91, arginine 110, and arginine 151. The segment at 236 to 270 (FVYGRGGQPCKVCGTELREVKLGQRASVFCPKCQR) adopts an FPG-type zinc-finger fold. Arginine 260 (proton donor; for delta-elimination activity) is an active-site residue.

Belongs to the FPG family. In terms of assembly, monomer. Zn(2+) is required as a cofactor.

It carries out the reaction Hydrolysis of DNA containing ring-opened 7-methylguanine residues, releasing 2,6-diamino-4-hydroxy-5-(N-methyl)formamidopyrimidine.. The enzyme catalyses 2'-deoxyribonucleotide-(2'-deoxyribose 5'-phosphate)-2'-deoxyribonucleotide-DNA = a 3'-end 2'-deoxyribonucleotide-(2,3-dehydro-2,3-deoxyribose 5'-phosphate)-DNA + a 5'-end 5'-phospho-2'-deoxyribonucleoside-DNA + H(+). Its function is as follows. Involved in base excision repair of DNA damaged by oxidation or by mutagenic agents. Acts as a DNA glycosylase that recognizes and removes damaged bases. Has a preference for oxidized purines, such as 7,8-dihydro-8-oxoguanine (8-oxoG). Has AP (apurinic/apyrimidinic) lyase activity and introduces nicks in the DNA strand. Cleaves the DNA backbone by beta-delta elimination to generate a single-strand break at the site of the removed base with both 3'- and 5'-phosphates. This Pseudomonas entomophila (strain L48) protein is Formamidopyrimidine-DNA glycosylase.